The primary structure comprises 110 residues: Small heat shock protein hspG11 (110 aa).

The sHSP domain maps to 30-110 (KTIIDILPPM…KSTSTSSTFR (81 aa)). A disordered region spans residues 78 to 110 (KDLNKQHNNNNNNNNNNNNLVIEKSTSTSSTFR). Over residues 85–96 (NNNNNNNNNNNN) the composition is skewed to low complexity. Residues 101–110 (KSTSTSSTFR) are compositionally biased toward polar residues.

The protein belongs to the small heat shock protein (HSP20) family.

The sequence is that of Small heat shock protein hspG11 (hspG11) from Dictyostelium discoideum (Social amoeba).